Reading from the N-terminus, the 98-residue chain is Cystatin-A (98 aa).

Met-1 is subject to N-acetylmethionine. The short motif at 46 to 50 (QVVAG) is the Secondary area of contact element.

The protein belongs to the cystatin family.

Its subcellular location is the cytoplasm. In terms of biological role, this is an intracellular thiol proteinase inhibitor. The polypeptide is Cystatin-A (CSTA) (Felis catus (Cat)).